The following is a 59-amino-acid chain: Venom protein 27.7 (59 aa).

Positions 1 to 29 (MTFITLTIGLSLRTIFLIFIFLPPPHLLA) are cleaved as a signal peptide.

This sequence belongs to the non-disulfide-bridged peptide (NDBP) superfamily. As to expression, expressed by the venom gland.

Its subcellular location is the secreted. This chain is Venom protein 27.7, found in Lychas mucronatus (Chinese swimming scorpion).